The sequence spans 134 residues: Putative pre-16S rRNA nuclease (134 aa).

This sequence belongs to the YqgF nuclease family.

Its subcellular location is the cytoplasm. Its function is as follows. Could be a nuclease involved in processing of the 5'-end of pre-16S rRNA. The protein is Putative pre-16S rRNA nuclease of Hydrogenovibrio crunogenus (strain DSM 25203 / XCL-2) (Thiomicrospira crunogena).